Consider the following 88-residue polypeptide: Small ribosomal subunit protein bS20 (88 aa).

Belongs to the bacterial ribosomal protein bS20 family.

Functionally, binds directly to 16S ribosomal RNA. The sequence is that of Small ribosomal subunit protein bS20 from Rhodopseudomonas palustris (strain BisB18).